Consider the following 309-residue polypeptide: MRIVFMGTPEFAVPSLKRLFEEGYDVLAVVTQPDKQRGRGMKVSFSPVKELALQKGVKVLQPESVKNNPEFLQELKELNPEVIVVAAYGKILPEEILTLPEYGCINVHASLLPKYRGAAPINWAIINGEKETGITTMLMDKGLDTGDMLLKRSIAIEEDDDAQTLHDKLANLGAEVLSETLKKLKEGKLIPEKQKDEEATYAPIITKEMGHIDWKSPACRIRNLIRGLKPWPGCYTFYDGKMLKIWKAEVVEHFGNEPPGSVLKSKDELIVKCGENALRILEIQQEGSRKMGIREYLIGHNIPEGTILK.

110–113 lines the (6S)-5,6,7,8-tetrahydrofolate pocket; sequence SLLP.

It belongs to the Fmt family.

The catalysed reaction is L-methionyl-tRNA(fMet) + (6R)-10-formyltetrahydrofolate = N-formyl-L-methionyl-tRNA(fMet) + (6S)-5,6,7,8-tetrahydrofolate + H(+). In terms of biological role, attaches a formyl group to the free amino group of methionyl-tRNA(fMet). The formyl group appears to play a dual role in the initiator identity of N-formylmethionyl-tRNA by promoting its recognition by IF2 and preventing the misappropriation of this tRNA by the elongation apparatus. The chain is Methionyl-tRNA formyltransferase from Caldanaerobacter subterraneus subsp. tengcongensis (strain DSM 15242 / JCM 11007 / NBRC 100824 / MB4) (Thermoanaerobacter tengcongensis).